The primary structure comprises 1121 residues: RecBCD enzyme subunit RecC (1121 aa).

This sequence belongs to the RecC family. As to quaternary structure, heterotrimer of RecB, RecC and RecD. All subunits contribute to DNA-binding.

In terms of biological role, a helicase/nuclease that prepares dsDNA breaks (DSB) for recombinational DNA repair. Binds to DSBs and unwinds DNA via a highly rapid and processive ATP-dependent bidirectional helicase activity. Unwinds dsDNA until it encounters a Chi (crossover hotspot instigator) sequence from the 3' direction. Cuts ssDNA a few nucleotides 3' to the Chi site. The properties and activities of the enzyme are changed at Chi. The Chi-altered holoenzyme produces a long 3'-ssDNA overhang and facilitates RecA-binding to the ssDNA for homologous DNA recombination and repair. Holoenzyme degrades any linearized DNA that is unable to undergo homologous recombination. In the holoenzyme this subunit recognizes the wild-type Chi sequence, and when added to isolated RecB increases its ATP-dependent helicase processivity. The protein is RecBCD enzyme subunit RecC of Haemophilus influenzae (strain ATCC 51907 / DSM 11121 / KW20 / Rd).